Consider the following 281-residue polypeptide: Diaminopimelate epimerase (281 aa).

Asn13 and Asn66 together coordinate substrate. Cys75 acts as the Proton donor in catalysis. Substrate-binding positions include 76–77, Asn164, Asn197, and 215–216; these read GN and ER. Cys224 acts as the Proton acceptor in catalysis. 225–226 is a binding site for substrate; that stretch reads GT.

Belongs to the diaminopimelate epimerase family. Homodimer.

It localises to the cytoplasm. It catalyses the reaction (2S,6S)-2,6-diaminopimelate = meso-2,6-diaminopimelate. It participates in amino-acid biosynthesis; L-lysine biosynthesis via DAP pathway; DL-2,6-diaminopimelate from LL-2,6-diaminopimelate: step 1/1. In terms of biological role, catalyzes the stereoinversion of LL-2,6-diaminopimelate (L,L-DAP) to meso-diaminopimelate (meso-DAP), a precursor of L-lysine and an essential component of the bacterial peptidoglycan. This is Diaminopimelate epimerase from Microcystis aeruginosa (strain NIES-843 / IAM M-2473).